The chain runs to 100 residues: Urease subunit gamma (100 aa).

This sequence belongs to the urease gamma subunit family. In terms of assembly, heterotrimer of UreA (gamma), UreB (beta) and UreC (alpha) subunits. Three heterotrimers associate to form the active enzyme.

It localises to the cytoplasm. It catalyses the reaction urea + 2 H2O + H(+) = hydrogencarbonate + 2 NH4(+). Its pathway is nitrogen metabolism; urea degradation; CO(2) and NH(3) from urea (urease route): step 1/1. The sequence is that of Urease subunit gamma from Bacillus sp. (strain TB-90).